A 27-amino-acid chain; its full sequence is Caerulein precursor fragment R5 (27 aa).

In terms of tissue distribution, expressed by the skin glands.

Its subcellular location is the secreted. Its function is as follows. Antimicrobial peptide. This is Caerulein precursor fragment R5 from Xenopus ruwenzoriensis (Uganda clawed frog).